Here is a 330-residue protein sequence, read N- to C-terminus: Ferredoxin--NADP reductase (330 aa).

7 residues coordinate FAD: E35, Q43, Y48, V90, F123, D285, and T326.

It belongs to the ferredoxin--NADP reductase type 2 family. Homodimer. FAD serves as cofactor.

The catalysed reaction is 2 reduced [2Fe-2S]-[ferredoxin] + NADP(+) + H(+) = 2 oxidized [2Fe-2S]-[ferredoxin] + NADPH. The polypeptide is Ferredoxin--NADP reductase (Streptococcus pyogenes serotype M28 (strain MGAS6180)).